We begin with the raw amino-acid sequence, 288 residues long: Shikimate dehydrogenase (NADP(+)) (288 aa).

Shikimate is bound by residues 14–16 (SIS) and Thr-63. Lys-67 serves as the catalytic Proton acceptor. Glu-79 contributes to the NADP(+) binding site. Shikimate is bound by residues Asn-88 and Asp-103. NADP(+) is bound by residues 127–131 (GSGGA), 151–156 (NRTYEK), and Met-219. Position 221 (Tyr-221) interacts with shikimate. Gly-242 is an NADP(+) binding site.

This sequence belongs to the shikimate dehydrogenase family. As to quaternary structure, homodimer.

It carries out the reaction shikimate + NADP(+) = 3-dehydroshikimate + NADPH + H(+). It functions in the pathway metabolic intermediate biosynthesis; chorismate biosynthesis; chorismate from D-erythrose 4-phosphate and phosphoenolpyruvate: step 4/7. In terms of biological role, involved in the biosynthesis of the chorismate, which leads to the biosynthesis of aromatic amino acids. Catalyzes the reversible NADPH linked reduction of 3-dehydroshikimate (DHSA) to yield shikimate (SA). This chain is Shikimate dehydrogenase (NADP(+)), found in Caldicellulosiruptor bescii (strain ATCC BAA-1888 / DSM 6725 / KCTC 15123 / Z-1320) (Anaerocellum thermophilum).